The following is a 316-amino-acid chain: Glutathione synthetase (316 aa).

The ATP-grasp domain maps to 125-311 (KLFTAWFPEL…ITGMLMNAIE (187 aa)). 151-207 (HQKHGDVIFKPLDGMGGASIFRLKKDDPNVGVIIETLTEHGNRFCMAQNFLPAIKEG) is a binding site for ATP. The Mg(2+) site is built by E281 and N283.

It belongs to the prokaryotic GSH synthase family. Requires Mg(2+) as cofactor. Mn(2+) is required as a cofactor.

The catalysed reaction is gamma-L-glutamyl-L-cysteine + glycine + ATP = glutathione + ADP + phosphate + H(+). It participates in sulfur metabolism; glutathione biosynthesis; glutathione from L-cysteine and L-glutamate: step 2/2. The sequence is that of Glutathione synthetase from Photorhabdus laumondii subsp. laumondii (strain DSM 15139 / CIP 105565 / TT01) (Photorhabdus luminescens subsp. laumondii).